The chain runs to 502 residues: MELKFNLKGAFKTSTDPTGAKEVIAQYFDEANNTILKKGAPEGQGAKITQWDIVDGSIELTIESGRYVRAHDAIMRLKKPLAAKLGKEFRIGIRGVDVKKFTISMPAEGEIGNMNIPHVSNISKVEGGLILELNVGESELERRIPDRILTLMEEKVRAKDYGGKAEHWQILWESDKKEHTFAGDPTQEMMKHGWIKRGASRGQWIHGPQSTKMFRTFEKIVYDELLEPLGYREMIFPKLVPWEVWQKSGHAKGVYPEIYYVCPPKTRDPAYWEEVSDHYKVTHEVPTELIKSKIGDPIGGLCYAQCPPFWMYLQGETIPTDEFPIKVFDKSGTSHRYESGGIHGIERVDEFHRVEIVWLGTKEQVIETARKLHERYMHIFNEILDLEWRKAWVTPWFMAQEGLTGLSEQGEAGTTDYEAPLPYRGDDGEWLEFQNVSINGNKYPSGFNVKSQTGEELWSGCSGVGLERWASAFFAQKGLDPENWPEEFRKRVGEVPKGIRFL.

An L-serine-binding site is contributed by alanine 304. Cysteine 306 is a Zn(2+) binding site. Arginine 336 contributes to the L-serine binding site. ATP is bound by residues 336–338 and 347–348; these read RYE and RV. L-serine is bound by residues 353–355 and glutamine 400; that span reads RVE. Glutamate 355 is a Zn(2+) binding site. Glutamate 432 serves as a coordination point for ATP. Residue asparagine 435 participates in L-serine binding. Residue cysteine 461 coordinates Zn(2+). Arginine 468 is a binding site for ATP.

The protein belongs to the class-II aminoacyl-tRNA synthetase family. Type-2 seryl-tRNA synthetase subfamily. As to quaternary structure, homodimer. Zn(2+) serves as cofactor.

It localises to the cytoplasm. The catalysed reaction is tRNA(Ser) + L-serine + ATP = L-seryl-tRNA(Ser) + AMP + diphosphate + H(+). It carries out the reaction tRNA(Sec) + L-serine + ATP = L-seryl-tRNA(Sec) + AMP + diphosphate + H(+). It functions in the pathway aminoacyl-tRNA biosynthesis; selenocysteinyl-tRNA(Sec) biosynthesis; L-seryl-tRNA(Sec) from L-serine and tRNA(Sec): step 1/1. In terms of biological role, catalyzes the attachment of serine to tRNA(Ser). Is also able to aminoacylate tRNA(Sec) with serine, to form the misacylated tRNA L-seryl-tRNA(Sec), which will be further converted into selenocysteinyl-tRNA(Sec). The polypeptide is Type-2 serine--tRNA ligase (Methanococcoides burtonii (strain DSM 6242 / NBRC 107633 / OCM 468 / ACE-M)).